Here is a 416-residue protein sequence, read N- to C-terminus: Serine hydroxymethyltransferase (416 aa).

(6S)-5,6,7,8-tetrahydrofolate-binding positions include L118 and 122 to 124; that span reads GHL. K226 carries the N6-(pyridoxal phosphate)lysine modification. (6S)-5,6,7,8-tetrahydrofolate contacts are provided by residues E242 and 350–352; that span reads SPF.

The protein belongs to the SHMT family. As to quaternary structure, homodimer. Requires pyridoxal 5'-phosphate as cofactor.

It localises to the cytoplasm. It catalyses the reaction (6R)-5,10-methylene-5,6,7,8-tetrahydrofolate + glycine + H2O = (6S)-5,6,7,8-tetrahydrofolate + L-serine. Its pathway is one-carbon metabolism; tetrahydrofolate interconversion. It participates in amino-acid biosynthesis; glycine biosynthesis; glycine from L-serine: step 1/1. Its function is as follows. Catalyzes the reversible interconversion of serine and glycine with tetrahydrofolate (THF) serving as the one-carbon carrier. This reaction serves as the major source of one-carbon groups required for the biosynthesis of purines, thymidylate, methionine, and other important biomolecules. Also exhibits THF-independent aldolase activity toward beta-hydroxyamino acids, producing glycine and aldehydes, via a retro-aldol mechanism. In Helicobacter hepaticus (strain ATCC 51449 / 3B1), this protein is Serine hydroxymethyltransferase.